A 913-amino-acid polypeptide reads, in one-letter code: MESLKSPVFLLILHLLEGVLSESLIQLNNNGYEGIVIAIDHDVPEDEALIQHIKDMVTQASPYLFEATGKRFYFKNVAILIPESWKAKPEYTRPKLETFKNADVLVSTTSPLGNDEPYTEHIGACGEKGIRIHLTPDFLAGKKLTQYGPQDRTFVHEWAHFRWGVFNEYNNDEKFYLSKGKPQAVRCSAAITGKNQVRRCQGGSCITNGKCVIDRVTGLYKDNCVFVPDPHQNEKASIMFNQNINSVVEFCTEKNHNQEAPNDQNQRCNLRSTWEVIQESEDFKQTTPMTAQPPAPTFSLLQIGQRIVCLVLDKSGSMLNDDRLNRMNQASRLFLLQTVEQGSWVGMVTFDSAAYVQSELKQLNSGADRDLLIKHLPTVSAGGTSICSGLRTAFTVIKKKYPTDGSEIVLLTDGEDNTISSCFDLVKQSGAIIHTVALGPAAAKELEQLSKMTGGLQTYSSDQVQNNGLVDAFAALSSGNAAIAQHSIQLESRGVNLQNNQWMNGSVIVDSSVGKDTLFLITWTTHPPTIFIWDPSGVEQNGFILDTTTKVAYLQVPGTAKVGFWKYSIQASSQTLTLTVTSRAASATLPPITVTPVVNKNTGKFPSPVTVYASIRQGASPILRASVTALIESVNGKTVTLELLDNGAGADATKNDGVYSRFFTAFDANGRYSVKIWALGGVTSDRQRAAPPKNRAMYIDGWIEDGEVRMNPPRPETSYVQDKQLCFSRTSSGGSFVATNVPAAAPIPDLFPPCQITDLKASIQGQNLVNLTWTAPGDDYDHGRASNYIIRMSTSIVDLRDHFNTSLQVNTTGLIPKEASSEEIFEFELGGNTFGNGTDIFIAIQAVDKSNLKSEISNIARVSVFIPAQEPPIPEDSTPPCPDISINSTIPGIHVLKIMWKWLGEMQVTLGLH.

Residues 1–21 (MESLKSPVFLLILHLLEGVLS) form the signal peptide. Positions 46–199 (DEALIQHIKD…AITGKNQVRR (154 aa)) are metalloprotease domain. His-156 is a binding site for Zn(2+). Glu-157 is an active-site residue. 2 residues coordinate Zn(2+): His-160 and Asn-167. The 170-residue stretch at 307 to 476 (IVCLVLDKSG…NGLVDAFAAL (170 aa)) folds into the VWFA domain. 6 N-linked (GlcNAc...) asparagine glycosylation sites follow: Asn-504, Asn-770, Asn-804, Asn-810, Asn-836, and Asn-887.

Belongs to the CLCR family. In terms of processing, the 110 kDa translation product is autoproteolytically cleaved by the metalloprotease domain in the endoplasmic reticulum into a 75 kDa N-terminal and a 35 kDa C-terminal products that remain physically associated with each other. The cleavage is necessary for calcium-activated chloride channel (CaCC) activation activity. Glycosylated. As to expression, exclusively expressed in the digestive and respiratory tracts and in the uterus (at protein level). Expressed in small intestine, colon, stomach, and uterus and slightly expressed in trachea tissue. Exclusively expressed in the mucin granule membranes of gastrointestinal, respiratory, and uterine goblet cells and other mucin-producing cells. In the colon, expressed in the surface mucous cells. In the stomach highly expressed in the surface epithelium in the pylorus. Strongly expressed in the airway epithelium of lung tissues associated with airway hyperresponsiveness (AHR).

The protein localises to the secreted. Its subcellular location is the extracellular space. Its function is as follows. May be involved in mediating calcium-activated chloride conductance. May play critical roles in goblet cell metaplasia, mucus hypersecretion, cystic fibrosis and AHR. May be involved in the regulation of mucus production and/or secretion by goblet cells. Involved in the regulation of tissue inflammation in the innate immune response. May play a role as a tumor suppressor. Induces MUC5AC. The sequence is that of Calcium-activated chloride channel regulator 1 (Clca1) from Mus musculus (Mouse).